A 288-amino-acid polypeptide reads, in one-letter code: Pantothenate synthetase (288 aa).

27–34 (MGALHEGH) is an ATP binding site. Histidine 34 acts as the Proton donor in catalysis. 2 residues coordinate (R)-pantoate: glutamine 58 and glutamine 150. Glutamine 58 lines the beta-alanine pocket. Residues leucine 173 and 181–184 (YSSR) contribute to the ATP site.

This sequence belongs to the pantothenate synthetase family. As to quaternary structure, homodimer.

It localises to the cytoplasm. It catalyses the reaction (R)-pantoate + beta-alanine + ATP = (R)-pantothenate + AMP + diphosphate + H(+). It functions in the pathway cofactor biosynthesis; (R)-pantothenate biosynthesis; (R)-pantothenate from (R)-pantoate and beta-alanine: step 1/1. Functionally, catalyzes the condensation of pantoate with beta-alanine in an ATP-dependent reaction via a pantoyl-adenylate intermediate. The sequence is that of Pantothenate synthetase from Tropheryma whipplei (strain TW08/27) (Whipple's bacillus).